The chain runs to 338 residues: Anthocyanidin reductase ((2S)-flavan-3-ol-forming) (338 aa).

NADP(+)-binding positions include 18–21 (TGFV), Lys-48, 87–90 (VATP), and Tyr-168.

This sequence belongs to the NAD(P)-dependent epimerase/dehydratase family. Dihydroflavonol-4-reductase subfamily.

The enzyme catalyses a (2S,3R)-flavan-3-ol + 2 NADP(+) = an anthocyanidin with a 3-hydroxy group + 2 NADPH + 2 H(+). It catalyses the reaction a (2S,3S)-flavan-3-ol + 2 NADP(+) = an anthocyanidin with a 3-hydroxy group + 2 NADPH + 2 H(+). Its pathway is secondary metabolite biosynthesis; flavonoid biosynthesis. Functionally, produces the terminal flavan-3-ol monomers required for the formation of proanthocyanidins or condensed tannins in leaves and flowers, as well as in the skin and seeds of developing berries. Behaves as a reductase and as a C-3 epimerase. Catalyzes the double reduction of anthocyanidins, producing a mixture of (2S,3S)- and (2S,3R)-flavan-3-ols. The enzyme catalyzes sequential hydride transfers to C-2 and C-4, respectively and epimerization at C-3 is achieved by tautomerization that occurs between the two hydride transfers. Converts cyanidin, pelargonidin and delphinidin into catechin and epicatechin, afzelechin and epiafzelechin, and gallocatechin and epigallocatechin respectively. In Vitis vinifera (Grape), this protein is Anthocyanidin reductase ((2S)-flavan-3-ol-forming).